A 351-amino-acid polypeptide reads, in one-letter code: Probable galacturonosyltransferase-like 4 (351 aa).

Residues 1–8 are Cytoplasmic-facing; sequence MASRSLSY. The helical; Signal-anchor for type II membrane protein transmembrane segment at 9-29 threads the bilayer; it reads TQLLGLLSFILLLVTTTTMAV. Residues 30–351 are Lumenal-facing; it reads RVGVILHKPS…YRSSRHSLEE (322 aa). Residues Asn-96 and Asn-203 are each glycosylated (N-linked (GlcNAc...) asparagine).

It belongs to the glycosyltransferase 8 family.

The protein localises to the golgi apparatus membrane. It participates in glycan metabolism; pectin biosynthesis. May be involved in pectin and/or xylans biosynthesis in cell walls. The polypeptide is Probable galacturonosyltransferase-like 4 (GATL4) (Arabidopsis thaliana (Mouse-ear cress)).